The sequence spans 95 residues: uncharacterized protein (95 aa).

It belongs to the asfivirus DP96R family.

This is an uncharacterized protein from African swine fever virus (isolate Warthog/Namibia/Wart80/1980) (ASFV).